The following is a 568-amino-acid chain: Glucose-6-phosphate isomerase, cytosolic 1 (568 aa).

The active-site Proton donor is the Glu-360. Catalysis depends on residues His-391 and Lys-516.

The protein belongs to the GPI family. In terms of assembly, homodimer.

It localises to the cytoplasm. It catalyses the reaction alpha-D-glucose 6-phosphate = beta-D-fructose 6-phosphate. The protein operates within carbohydrate degradation; glycolysis; D-glyceraldehyde 3-phosphate and glycerone phosphate from D-glucose: step 2/4. The sequence is that of Glucose-6-phosphate isomerase, cytosolic 1 (PGIC1) from Clarkia mildrediae.